A 190-amino-acid chain; its full sequence is Glycerol-3-phosphate acyltransferase 2 (190 aa).

The next 5 helical transmembrane spans lie at 1-21 (MNIL…ALIV), 53-73 (VIVA…PLIL), 76-96 (TINP…SVFA), 110-130 (VFLF…VLTL), and 152-172 (LIFE…SIII).

It belongs to the PlsY family. As to quaternary structure, probably interacts with PlsX.

Its subcellular location is the cell membrane. It catalyses the reaction an acyl phosphate + sn-glycerol 3-phosphate = a 1-acyl-sn-glycero-3-phosphate + phosphate. It functions in the pathway lipid metabolism; phospholipid metabolism. Its function is as follows. Catalyzes the transfer of an acyl group from acyl-phosphate (acyl-PO(4)) to glycerol-3-phosphate (G3P) to form lysophosphatidic acid (LPA). This enzyme utilizes acyl-phosphate as fatty acyl donor, but not acyl-CoA or acyl-ACP. The polypeptide is Glycerol-3-phosphate acyltransferase 2 (Bacillus anthracis).